The chain runs to 410 residues: Putative odorant receptor 65c (410 aa).

Topologically, residues 1-59 (MDIRGNVHRFVKFYIDGWKHFRDPTMESSYSAVYYWREQMKAMFLYTTSKERQMPYRSS) are cytoplasmic. A helical membrane pass occupies residues 60-80 (WHTLVIIQATVCFLTMCYGVT). Residues 81-92 (ESLGDKVQMGRD) are Extracellular-facing. Residues 93 to 113 (IAFIIGFFYIAFKIYYFQWYG) form a helical membrane-spanning segment. The Cytoplasmic segment spans residues 114 to 148 (DELDEVVEALETFHPWAQKGPGAVDYRTAKRWYFT). The helical transmembrane segment at 149 to 169 (LAFFLASSWLVFLCIFILLLI) threads the bilayer. Over 170 to 222 (TSPLWVHQQILPLHAAFPFQWHEKSIHPISHAFIYLFQTWNVMYFLTWLVCIE) the chain is Extracellular. A helical membrane pass occupies residues 223 to 243 (GLSVSIYVEITFAIEVLCLEL). Over 244 to 279 (RHLHQRCHGYEQLRLETNRLVQFHQKIVHILDHTNK) the chain is Cytoplasmic. A helical transmembrane segment spans residues 280 to 300 (VFHGTLIMQMGVNFFLVSLSV). Topologically, residues 301–312 (LEAMEARKDPKV) are extracellular. The helical transmembrane segment at 313–333 (VAQFAVLMLLALGHLSMWSYF) threads the bilayer. Residues 334 to 385 (GDLLSQKSLTISEAAYEAYDPIKGSKDVYRDLCLIIRRGQEPLIMRASPFPS) lie on the Cytoplasmic side of the membrane. A helical membrane pass occupies residues 386-406 (FNFINYSAILNQCYGILTFLL). Over 407-410 (KTLD) the chain is Extracellular.

This sequence belongs to the insect chemoreceptor superfamily. Heteromeric odorant receptor channel (TC 1.A.69) family. Or49a subfamily. In terms of assembly, interacts with Orco. Complexes exist early in the endomembrane system in olfactory sensory neurons (OSNs), coupling these complexes to the conserved ciliary trafficking pathway.

The protein localises to the cell membrane. Functionally, odorant receptor which mediates acceptance or avoidance behavior, depending on its substrates. The odorant receptor repertoire encodes a large collection of odor stimuli that vary widely in identity, intensity, and duration. May form a complex with Orco to form odorant-sensing units, providing sensitive and prolonged odorant signaling and calcium permeability. The polypeptide is Putative odorant receptor 65c (Or65c) (Drosophila melanogaster (Fruit fly)).